A 145-amino-acid chain; its full sequence is Peroxide operon regulator (145 aa).

Residues 1-78 are DNA-binding; sequence MAAHELKEAL…SGLVKELTYG (78 aa). Residues C96, C99, C136, and C139 each coordinate Zn(2+).

Belongs to the Fur family. In terms of assembly, homodimer. Requires Mn(2+) as cofactor. It depends on Fe(2+) as a cofactor. The cofactor is Zn(2+). In terms of processing, possibly oxidized on a cysteine residue; the Cys-SOH formed in response to oxidative signaling may rapidly react with a Cys-SH to form a disulfide bond, leading to the loss of metal ion and inactivation of repressor function. Oxidized PerR can be further reduced by thiol reductants and repressor activity restored.

The protein resides in the cytoplasm. Its function is as follows. Hydrogen and organic peroxide sensor. Represses the expression of a regulon of peroxide-inducible genes such as katA, ahpC, ahpF, the heme biosynthesis operon (hemAXCDBL), fur, perR, zosA and mrgA. The sequence is that of Peroxide operon regulator (perR) from Bacillus subtilis (strain 168).